Reading from the N-terminus, the 205-residue chain is Small ribosomal subunit protein uS4 (205 aa).

Over residues 1–16 (MSKRESSKYKIDRRMG) the composition is skewed to basic and acidic residues. The segment at 1-46 (MSKRESSKYKIDRRMGENIWGRPKSPVNRREYGPGQHGQRRKSKLS) is disordered. Positions 94 to 157 (SRLDAIVYRA…KQLVTVLEAV (64 aa)) constitute an S4 RNA-binding domain.

Belongs to the universal ribosomal protein uS4 family. As to quaternary structure, part of the 30S ribosomal subunit. Contacts protein S5. The interaction surface between S4 and S5 is involved in control of translational fidelity.

One of the primary rRNA binding proteins, it binds directly to 16S rRNA where it nucleates assembly of the body of the 30S subunit. In terms of biological role, with S5 and S12 plays an important role in translational accuracy. In Sinorhizobium medicae (strain WSM419) (Ensifer medicae), this protein is Small ribosomal subunit protein uS4.